The following is a 417-amino-acid chain: Serine hydroxymethyltransferase (417 aa).

(6S)-5,6,7,8-tetrahydrofolate is bound by residues Leu121 and Gly125–Leu127. The residue at position 229 (Lys229) is an N6-(pyridoxal phosphate)lysine. (6S)-5,6,7,8-tetrahydrofolate is bound at residue Ser354–Phe356.

Belongs to the SHMT family. As to quaternary structure, homodimer. The cofactor is pyridoxal 5'-phosphate.

It is found in the cytoplasm. It catalyses the reaction (6R)-5,10-methylene-5,6,7,8-tetrahydrofolate + glycine + H2O = (6S)-5,6,7,8-tetrahydrofolate + L-serine. It participates in one-carbon metabolism; tetrahydrofolate interconversion. The protein operates within amino-acid biosynthesis; glycine biosynthesis; glycine from L-serine: step 1/1. Catalyzes the reversible interconversion of serine and glycine with tetrahydrofolate (THF) serving as the one-carbon carrier. This reaction serves as the major source of one-carbon groups required for the biosynthesis of purines, thymidylate, methionine, and other important biomolecules. Also exhibits THF-independent aldolase activity toward beta-hydroxyamino acids, producing glycine and aldehydes, via a retro-aldol mechanism. The sequence is that of Serine hydroxymethyltransferase from Dichelobacter nodosus (strain VCS1703A).